Consider the following 308-residue polypeptide: Sulfate adenylyltransferase subunit 2 (308 aa).

Belongs to the PAPS reductase family. CysD subfamily. Heterodimer composed of CysD, the smaller subunit, and CysN.

It catalyses the reaction sulfate + ATP + H(+) = adenosine 5'-phosphosulfate + diphosphate. It participates in sulfur metabolism; hydrogen sulfide biosynthesis; sulfite from sulfate: step 1/3. In terms of biological role, with CysN forms the ATP sulfurylase (ATPS) that catalyzes the adenylation of sulfate producing adenosine 5'-phosphosulfate (APS) and diphosphate, the first enzymatic step in sulfur assimilation pathway. APS synthesis involves the formation of a high-energy phosphoric-sulfuric acid anhydride bond driven by GTP hydrolysis by CysN coupled to ATP hydrolysis by CysD. This chain is Sulfate adenylyltransferase subunit 2, found in Chromobacterium violaceum (strain ATCC 12472 / DSM 30191 / JCM 1249 / CCUG 213 / NBRC 12614 / NCIMB 9131 / NCTC 9757 / MK).